Reading from the N-terminus, the 334-residue chain is Ornithine carbamoyltransferase (334 aa).

Residues 56–59 (STRT), glutamine 83, arginine 107, and 134–137 (HPTQ) each bind carbamoyl phosphate. Residues asparagine 168, aspartate 232, and 236-237 (SM) contribute to the L-ornithine site. Carbamoyl phosphate is bound by residues 274–275 (CL) and arginine 320.

Belongs to the aspartate/ornithine carbamoyltransferase superfamily. OTCase family.

It is found in the cytoplasm. The enzyme catalyses carbamoyl phosphate + L-ornithine = L-citrulline + phosphate + H(+). Its pathway is amino-acid biosynthesis; L-arginine biosynthesis; L-arginine from L-ornithine and carbamoyl phosphate: step 1/3. Its function is as follows. Reversibly catalyzes the transfer of the carbamoyl group from carbamoyl phosphate (CP) to the N(epsilon) atom of ornithine (ORN) to produce L-citrulline. In Shigella dysenteriae serotype 1 (strain Sd197), this protein is Ornithine carbamoyltransferase.